The following is a 362-amino-acid chain: DNA polymerase IV (362 aa).

The 182-residue stretch at 6-187 folds into the UmuC domain; that stretch reads IIHVDMDAFY…LPVSSFHGVG (182 aa). Mg(2+)-binding residues include Asp-10 and Asp-105. The active site involves Glu-106.

The protein belongs to the DNA polymerase type-Y family. In terms of assembly, monomer. Mg(2+) is required as a cofactor.

It is found in the cytoplasm. The catalysed reaction is DNA(n) + a 2'-deoxyribonucleoside 5'-triphosphate = DNA(n+1) + diphosphate. Functionally, poorly processive, error-prone DNA polymerase involved in untargeted mutagenesis. Copies undamaged DNA at stalled replication forks, which arise in vivo from mismatched or misaligned primer ends. These misaligned primers can be extended by PolIV. Exhibits no 3'-5' exonuclease (proofreading) activity. May be involved in translesional synthesis, in conjunction with the beta clamp from PolIII. In Leptospira interrogans serogroup Icterohaemorrhagiae serovar Lai (strain 56601), this protein is DNA polymerase IV.